The chain runs to 79 residues: MRFIIRTVMLIALVWIGLLLSGYGVLIGSKENAAGLGLQCTYLTARGTSTVQYLHTKSGFLEITDCPLLRKSNIVVDNG.

A signal peptide spans 1–33 (MRFIIRTVMLIALVWIGLLLSGYGVLIGSKENA).

This is an uncharacterized protein from Shigella flexneri.